The sequence spans 319 residues: Lambda-crystallin homolog (319 aa).

Residue alanine 2 is modified to N-acetylalanine. The residue at position 3 (serine 3) is a Phosphoserine. NAD(+) is bound by residues 16–17 (LI), aspartate 36, glutamate 97, and lysine 102.

The protein belongs to the 3-hydroxyacyl-CoA dehydrogenase family. As to quaternary structure, homodimer.

Its subcellular location is the cytoplasm. The catalysed reaction is L-gulonate + NAD(+) = 3-dehydro-L-gulonate + NADH + H(+). Its activity is regulated as follows. Inhibited by malonate. Its function is as follows. Has high L-gulonate 3-dehydrogenase activity. It also exhibits low dehydrogenase activity toward L-3-hydroxybutyrate (HBA) and L-threonate. The polypeptide is Lambda-crystallin homolog (Cryl1) (Rattus norvegicus (Rat)).